The sequence spans 641 residues: 1-deoxy-D-xylulose-5-phosphate synthase (641 aa).

Residues His-71 and 112-114 contribute to the thiamine diphosphate site; that span reads SHA. Asp-144 contributes to the Mg(2+) binding site. Thiamine diphosphate contacts are provided by residues 145–146, Asn-173, Tyr-284, and Glu-365; that span reads GA. Asn-173 contributes to the Mg(2+) binding site.

It belongs to the transketolase family. DXPS subfamily. Homodimer. It depends on Mg(2+) as a cofactor. Thiamine diphosphate serves as cofactor.

The catalysed reaction is D-glyceraldehyde 3-phosphate + pyruvate + H(+) = 1-deoxy-D-xylulose 5-phosphate + CO2. It participates in metabolic intermediate biosynthesis; 1-deoxy-D-xylulose 5-phosphate biosynthesis; 1-deoxy-D-xylulose 5-phosphate from D-glyceraldehyde 3-phosphate and pyruvate: step 1/1. In terms of biological role, catalyzes the acyloin condensation reaction between C atoms 2 and 3 of pyruvate and glyceraldehyde 3-phosphate to yield 1-deoxy-D-xylulose-5-phosphate (DXP). In Mycolicibacterium paratuberculosis (strain ATCC BAA-968 / K-10) (Mycobacterium paratuberculosis), this protein is 1-deoxy-D-xylulose-5-phosphate synthase.